Here is a 734-residue protein sequence, read N- to C-terminus: Photosystem I P700 chlorophyll a apoprotein A2 (734 aa).

8 helical membrane passes run 46 to 69 (IFASHFGQLAIIFLWTSGNLFHVA), 135 to 158 (LYTGAIFLLILSTISLIAGWLHLQ), 175 to 199 (LNHHLSGLFGVSSLAWTGHLVHVAI), 273 to 291 (IAHHHLAIAFIFLVAGHMY), 330 to 353 (IHFQLGLALASLGVITSLVAQHMY), 369 to 395 (AALYTHHQYIAGFIMTGAFAHGAIFFI), 417 to 439 (AIISHLSWASLFLGFHTLGLYVH), and 517 to 535 (FLVHHAIALGLHTTTLILV). [4Fe-4S] cluster is bound by residues C559 and C568. Helical transmembrane passes span 575-596 (AFYLAVFWMLNTIGWVTFYWHW) and 643-665 (LSVWAWMFLFGHLVWATGFMFLI). The chlorophyll a site is built by H654, M662, and Y670. Position 671 (W671) interacts with phylloquinone. Residues 707-727 (LVGLAHFSVGYIFTYAAFLIA) form a helical membrane-spanning segment.

This sequence belongs to the PsaA/PsaB family. The PsaA/B heterodimer binds the P700 chlorophyll special pair and subsequent electron acceptors. PSI consists of a core antenna complex that captures photons, and an electron transfer chain that converts photonic excitation into a charge separation. The eukaryotic PSI reaction center is composed of at least 11 subunits. It depends on P700 is a chlorophyll a/chlorophyll a' dimer, A0 is one or more chlorophyll a, A1 is one or both phylloquinones and FX is a shared 4Fe-4S iron-sulfur center. as a cofactor.

The protein localises to the plastid. It localises to the chloroplast thylakoid membrane. The enzyme catalyses reduced [plastocyanin] + hnu + oxidized [2Fe-2S]-[ferredoxin] = oxidized [plastocyanin] + reduced [2Fe-2S]-[ferredoxin]. Functionally, psaA and PsaB bind P700, the primary electron donor of photosystem I (PSI), as well as the electron acceptors A0, A1 and FX. PSI is a plastocyanin-ferredoxin oxidoreductase, converting photonic excitation into a charge separation, which transfers an electron from the donor P700 chlorophyll pair to the spectroscopically characterized acceptors A0, A1, FX, FA and FB in turn. Oxidized P700 is reduced on the lumenal side of the thylakoid membrane by plastocyanin. The polypeptide is Photosystem I P700 chlorophyll a apoprotein A2 (Phaseolus vulgaris (Kidney bean)).